A 302-amino-acid polypeptide reads, in one-letter code: D-alanine--D-alanine ligase (302 aa).

In terms of domain architecture, ATP-grasp spans 100–295 (KTVFDHHGIL…FNELIAKLIE (196 aa)). ATP is bound at residue 126 to 180 (QDLEPPVFIKPNSGGSSLGMTFARTAEELEKGIETVFSLGDSALVEEYTKGIEVT). The Mg(2+) site is built by D250, E262, and N264.

Belongs to the D-alanine--D-alanine ligase family. It depends on Mg(2+) as a cofactor. Mn(2+) serves as cofactor.

The protein localises to the cytoplasm. It carries out the reaction 2 D-alanine + ATP = D-alanyl-D-alanine + ADP + phosphate + H(+). It functions in the pathway cell wall biogenesis; peptidoglycan biosynthesis. In terms of biological role, cell wall formation. In Maridesulfovibrio salexigens (strain ATCC 14822 / DSM 2638 / NCIMB 8403 / VKM B-1763) (Desulfovibrio salexigens), this protein is D-alanine--D-alanine ligase.